We begin with the raw amino-acid sequence, 72 residues long: Lantibiotic Flvbeta.g (72 aa).

Positions 1–34 (MNNNNFDMEKFKKLAAIVSEGEIDEMLDETTVGA) are cleaved as a propeptide — cleaved by FlvT. Positions 36-40 (STLPC) form a cross-link, lanthionine (Ser-Cys); by FlvM2. 2,3-didehydrobutyrine; by FlvM2 is present on residues T37, T46, and T48. Cross-links (beta-methyllanthionine (Thr-Cys); by FlvM2) lie at residues 55-61 (TTGFDWC), 63-66 (TGAC), and 67-70 (THSC).

Contains LL-lanthionine and DL-beta-methyllanthionine, when coepressed in E.coli with the flavecin synthetase FlvM2.

It localises to the secreted. Functionally, lanthionine-containing peptide antibiotic (lantibiotic) that is probably weakly active on Gram-positive bacteria, since its analog [Del1]Flvbeta.g shows weak antibacterial activity against M.luteus. This activity is synergistically enhanced by [Del2]Flvalpha.a, an analog of Flvalpha.a, which is encoded by the same operon than Flvbeta.g. The bactericidal activity of lantibiotics is based on depolarization of energized bacterial cytoplasmic membranes, initiated by the formation of aqueous transmembrane pores. The sequence is that of Lantibiotic Flvbeta.g from Ruminococcus flavefaciens.